A 121-amino-acid polypeptide reads, in one-letter code: MRHYEIVLLIHPDQSEQVPAMLERYKGMITAGGGTVHRVEDWGRRQLVYLIQKLAKAHYLCINIEASQAVMEEIEHAFKFNDAVLRHLTVVKKKAETGPSLMMRNVEREEARKTQQQEFAA.

Residues 99 to 121 (PSLMMRNVEREEARKTQQQEFAA) are disordered. Basic and acidic residues predominate over residues 105 to 115 (NVEREEARKTQ).

This sequence belongs to the bacterial ribosomal protein bS6 family.

In terms of biological role, binds together with bS18 to 16S ribosomal RNA. In Polaromonas naphthalenivorans (strain CJ2), this protein is Small ribosomal subunit protein bS6.